A 181-amino-acid polypeptide reads, in one-letter code: RNA pyrophosphohydrolase (181 aa).

Positions 6–148 constitute a Nudix hydrolase domain; it reads GFRPNVGIIV…KRQVYRQALQ (143 aa). Positions 38–59 match the Nudix box motif; the sequence is GGVEANETPLEALYRELREEVG.

This sequence belongs to the Nudix hydrolase family. RppH subfamily. It depends on a divalent metal cation as a cofactor.

In terms of biological role, accelerates the degradation of transcripts by removing pyrophosphate from the 5'-end of triphosphorylated RNA, leading to a more labile monophosphorylated state that can stimulate subsequent ribonuclease cleavage. The sequence is that of RNA pyrophosphohydrolase from Halorhodospira halophila (strain DSM 244 / SL1) (Ectothiorhodospira halophila (strain DSM 244 / SL1)).